Here is a 469-residue protein sequence, read N- to C-terminus: ATP synthase subunit beta (469 aa).

156–163 (GGAGVGKT) is an ATP binding site.

It belongs to the ATPase alpha/beta chains family. In terms of assembly, F-type ATPases have 2 components, CF(1) - the catalytic core - and CF(0) - the membrane proton channel. CF(1) has five subunits: alpha(3), beta(3), gamma(1), delta(1), epsilon(1). CF(0) has three main subunits: a(1), b(2) and c(9-12). The alpha and beta chains form an alternating ring which encloses part of the gamma chain. CF(1) is attached to CF(0) by a central stalk formed by the gamma and epsilon chains, while a peripheral stalk is formed by the delta and b chains.

Its subcellular location is the cell membrane. It catalyses the reaction ATP + H2O + 4 H(+)(in) = ADP + phosphate + 5 H(+)(out). Functionally, produces ATP from ADP in the presence of a proton gradient across the membrane. The catalytic sites are hosted primarily by the beta subunits. This chain is ATP synthase subunit beta, found in Lactococcus lactis subsp. cremoris (strain MG1363).